Reading from the N-terminus, the 853-residue chain is DNA mismatch repair protein MutS (853 aa).

ATP is bound at residue 614 to 621; the sequence is GPNMGGKS.

Belongs to the DNA mismatch repair MutS family.

Functionally, this protein is involved in the repair of mismatches in DNA. It is possible that it carries out the mismatch recognition step. This protein has a weak ATPase activity. The polypeptide is DNA mismatch repair protein MutS (Escherichia coli (strain K12 / MC4100 / BW2952)).